A 170-amino-acid polypeptide reads, in one-letter code: Urease accessory protein UreE (170 aa).

The protein belongs to the UreE family.

The protein resides in the cytoplasm. Involved in urease metallocenter assembly. Binds nickel. Probably functions as a nickel donor during metallocenter assembly. In Helicobacter pylori (strain G27), this protein is Urease accessory protein UreE.